Consider the following 303-residue polypeptide: Movement protein (303 aa).

This sequence belongs to the tobamovirus movement protein family.

The protein localises to the host cytoplasm. It is found in the host cytoskeleton. Its subcellular location is the host cell junction. It localises to the host plasmodesma. Transports viral genome to neighboring plant cells directly through plasmosdesmata, without any budding. The movement protein allows efficient cell to cell propagation, by bypassing the host cell wall barrier. Forms a ribonucleoprotein complex with viral RNA. Binds microtubules and modulates microtubule stability. Can bind double-stranded DNA. The chain is Movement protein (MP) from Cymbidium (ORSV).